We begin with the raw amino-acid sequence, 164 residues long: SsrA-binding protein (164 aa).

Belongs to the SmpB family.

The protein localises to the cytoplasm. Its function is as follows. Required for rescue of stalled ribosomes mediated by trans-translation. Binds to transfer-messenger RNA (tmRNA), required for stable association of tmRNA with ribosomes. tmRNA and SmpB together mimic tRNA shape, replacing the anticodon stem-loop with SmpB. tmRNA is encoded by the ssrA gene; the 2 termini fold to resemble tRNA(Ala) and it encodes a 'tag peptide', a short internal open reading frame. During trans-translation Ala-aminoacylated tmRNA acts like a tRNA, entering the A-site of stalled ribosomes, displacing the stalled mRNA. The ribosome then switches to translate the ORF on the tmRNA; the nascent peptide is terminated with the 'tag peptide' encoded by the tmRNA and targeted for degradation. The ribosome is freed to recommence translation, which seems to be the essential function of trans-translation. This is SsrA-binding protein from Corynebacterium efficiens (strain DSM 44549 / YS-314 / AJ 12310 / JCM 11189 / NBRC 100395).